Reading from the N-terminus, the 372-residue chain is 18-hydroxynorfluorocurarine reductase (372 aa).

9 residues coordinate Zn(2+): Cys47, Asp50, His69, Glu70, Cys100, Cys103, Cys106, Cys114, and Cys172. Residues 197 to 202, Lys226, 283 to 285, Ser307, and Arg354 contribute to the NADP(+) site; these read GLGGIG and LGA.

This sequence belongs to the zinc-containing alcohol dehydrogenase family. Homodimer. It depends on Zn(2+) as a cofactor.

The enzyme catalyses (19E)-cur-19-en-17-al + NADP(+) = norfluorocurarine + NADPH + H(+). It catalyses the reaction 17,18-epoxy-17-hydroxycur-19-ene + NADP(+) = 18-hydroxynorfluorocurarine + NADPH + H(+). It functions in the pathway alkaloid biosynthesis. Its function is as follows. Alcohol dehydrogenase involved in the biosynthesis of curare monoterpene indole alkaloids (MIAs), natural products such as diaboline, a pharmacologically active compound used to regulate blood pressure. Curare alkaloids act as animal glycine receptor antagonists. Catalyzes the conversion of norfluorocurarine to desoxy Wieland-Gumlich aldehyde, and of 18-OH norfluorocurarine to Wieland-Gumlich aldehyde. The polypeptide is 18-hydroxynorfluorocurarine reductase (Strychnos sp).